Reading from the N-terminus, the 207-residue chain is Small ribosomal subunit protein uS4 (207 aa).

A disordered region spans residues 31-56 (KCKLDSKPGQHGRTSGARTSDYGNQL). Over residues 42–53 (GRTSGARTSDYG) the composition is skewed to polar residues. Residues 97–157 (ARLDNVVYRM…EKSKKQVRIV (61 aa)) enclose the S4 RNA-binding domain.

This sequence belongs to the universal ribosomal protein uS4 family. Part of the 30S ribosomal subunit. Contacts protein S5. The interaction surface between S4 and S5 is involved in control of translational fidelity.

Functionally, one of the primary rRNA binding proteins, it binds directly to 16S rRNA where it nucleates assembly of the body of the 30S subunit. Its function is as follows. With S5 and S12 plays an important role in translational accuracy. The chain is Small ribosomal subunit protein uS4 from Janthinobacterium sp. (strain Marseille) (Minibacterium massiliensis).